The chain runs to 825 residues: Zygotic DNA replication licensing factor mcm6-B (825 aa).

The C4-type zinc finger occupies 159 to 186; it reads CLDCQTLVRDVEQQFKYTQPSICRNPVC. Residues 347–554 form the MCM domain; it reads LYHNLCTSLF…TDYAIARRIV (208 aa). 397 to 404 serves as a coordination point for ATP; it reads GDPSTAKS. The short motif at 529–532 is the Arginine finger element; sequence SRFD. Residues 668–679 are compositionally biased toward acidic residues; sequence DQEDEHEVEEPQ. The tract at residues 668-690 is disordered; sequence DQEDEHEVEEPQEGINGDADVPN.

This sequence belongs to the MCM family. In terms of assembly, component of the mcm2-7 complex (RLF-M). The complex forms a toroidal hexameric ring with the proposed subunit order mcm2-mcm6-mcm4-mcm7-mcm3-mcm5 (By simililarity). Begins to associate with zmcm3, mcm4 and mcm7 into mcm complexes at the neurula stage.

The protein localises to the nucleus. The catalysed reaction is ATP + H2O = ADP + phosphate + H(+). Its function is as follows. Acts as a component of the mcm2-7 complex (mcm complex) which is the putative replicative helicase essential for 'once per cell cycle' DNA replication initiation and elongation in eukaryotic cells. The active ATPase sites in the mcm2-7 ring are formed through the interaction surfaces of two neighboring subunits such that a critical structure of a conserved arginine finger motif is provided in trans relative to the ATP-binding site of the Walker A box of the adjacent subunit. The six ATPase active sites, however, are likely to contribute differentially to the complex helicase activity. The existence of maternal and zygotic forms of mcm3 and mcm6 suggests that specific forms of mcm2-7 complexes may be used during different stages of development. May replace mmcm6 in the mcm2-7 complex. This chain is Zygotic DNA replication licensing factor mcm6-B (zmcm6-b), found in Xenopus laevis (African clawed frog).